A 696-amino-acid chain; its full sequence is GPI mannosyltransferase 4 (696 aa).

Transmembrane regions (helical) follow at residues 100-120 (WQLELLGTYAYVVFPRLIYTL), 125-142 (NDYCLFRICRLYGLRFEI), 149-169 (SSWILLVFGTRTFSNSLEMAM), 185-205 (NTVVYKKEFLEEKYDKAESIS), 227-247 (AMSTICVAGVFNRPTFLLFGA), and 338-358 (YVHLMVNMPMLFNVLALASLG).

Belongs to the glycosyltransferase 22 family. PIGZ subfamily.

The protein localises to the endoplasmic reticulum membrane. Its pathway is glycolipid biosynthesis; glycosylphosphatidylinositol-anchor biosynthesis. In terms of biological role, mannosyltransferase involved in glycosylphosphatidylinositol-anchor biosynthesis. Transfers a fourth mannose to some trimannosyl-GPIs during GPI precursor assembly. In Drosophila melanogaster (Fruit fly), this protein is GPI mannosyltransferase 4.